Consider the following 156-residue polypeptide: Small ribosomal subunit protein uS7 (156 aa).

Belongs to the universal ribosomal protein uS7 family. In terms of assembly, part of the 30S ribosomal subunit. Contacts proteins S9 and S11.

In terms of biological role, one of the primary rRNA binding proteins, it binds directly to 16S rRNA where it nucleates assembly of the head domain of the 30S subunit. Is located at the subunit interface close to the decoding center, probably blocks exit of the E-site tRNA. In Thiomonas delicata (Thiomonas cuprina), this protein is Small ribosomal subunit protein uS7.